The sequence spans 441 residues: Ribulose bisphosphate carboxylase large chain (441 aa).

K5 is modified (N6,N6,N6-trimethyllysine). Position 164 (T164) interacts with substrate. Residue K166 is the Proton acceptor of the active site. K168 provides a ligand contact to substrate. Mg(2+)-binding residues include K192, D194, and E195. K192 carries the post-translational modification N6-carboxylysine. H285 functions as the Proton acceptor in the catalytic mechanism. Positions 286, 318, and 370 each coordinate substrate.

Belongs to the RuBisCO large chain family. Type I subfamily. In terms of assembly, heterohexadecamer of 8 large chains and 8 small chains; disulfide-linked. The disulfide link is formed within the large subunit homodimers. The cofactor is Mg(2+). In terms of processing, the disulfide bond which can form in the large chain dimeric partners within the hexadecamer appears to be associated with oxidative stress and protein turnover.

The protein resides in the plastid. Its subcellular location is the chloroplast. It carries out the reaction 2 (2R)-3-phosphoglycerate + 2 H(+) = D-ribulose 1,5-bisphosphate + CO2 + H2O. The enzyme catalyses D-ribulose 1,5-bisphosphate + O2 = 2-phosphoglycolate + (2R)-3-phosphoglycerate + 2 H(+). Its function is as follows. RuBisCO catalyzes two reactions: the carboxylation of D-ribulose 1,5-bisphosphate, the primary event in carbon dioxide fixation, as well as the oxidative fragmentation of the pentose substrate in the photorespiration process. Both reactions occur simultaneously and in competition at the same active site. This chain is Ribulose bisphosphate carboxylase large chain, found in Hemionitis engywookii (Fendler's false cloak fern).